A 374-amino-acid chain; its full sequence is Mannitol-1-phosphate 5-dehydrogenase (374 aa).

Residue A3 to G14 coordinates NAD(+).

The protein belongs to the mannitol dehydrogenase family.

It carries out the reaction D-mannitol 1-phosphate + NAD(+) = beta-D-fructose 6-phosphate + NADH + H(+). This chain is Mannitol-1-phosphate 5-dehydrogenase, found in Shouchella clausii (strain KSM-K16) (Alkalihalobacillus clausii).